The sequence spans 107 residues: SH3 domain-binding glutamic acid-rich-like protein 2 (107 aa).

The SH3-binding signature appears at 61–67; it reads QGNPLPP.

It belongs to the SH3BGR family.

It localises to the nucleus. This Mus musculus (Mouse) protein is SH3 domain-binding glutamic acid-rich-like protein 2 (Sh3bgrl2).